Here is a 1940-residue protein sequence, read N- to C-terminus: Myosin-2 (1940 aa).

Residues 33–82 enclose the Myosin N-terminal SH3-like domain; it reads DAKTSVFVAEPKESFVKGTIQSREGGKVTVKTEGGATLTVKEDQVFPMNP. Phosphothreonine occurs at positions 64 and 69. One can recognise a Myosin motor domain in the interval 86-783; sequence DKIEDMAMMT…LLGLLEEMRD (698 aa). Lys-130 carries the N6,N6,N6-trimethyllysine modification. 179–186 provides a ligand contact to ATP; sequence GESGAGKT. A Phosphotyrosine modification is found at Tyr-389. At Ser-392 the chain carries Phosphoserine. A Phosphothreonine modification is found at Thr-419. Phosphoserine is present on Ser-625. The interval 660–682 is actin-binding; sequence LNKLMTNLRSTHPHFVRCIIPNE. The residue at position 758 (His-758) is a Pros-methylhistidine. The interval 762 to 776 is actin-binding; the sequence is KFGHTKVFFKAGLLG. The 30-residue stretch at 786 to 815 folds into the IQ domain; that stretch reads LAQLMTRTQARCRGFLARVEYQKMVERRES. Residues 844-1940 are a coiled coil; that stretch reads LLKSAETEKE…EVHTKIISEE (1097 aa). 4 positions are modified to phosphoserine: Ser-1093, Ser-1097, Ser-1163, and Ser-1238. Thr-1242 is subject to Phosphothreonine. Ser-1244 is modified (phosphoserine). Thr-1256 and Thr-1287 each carry phosphothreonine. Ser-1289, Ser-1293, Ser-1304, and Ser-1307 each carry phosphoserine. Tyr-1465 carries the post-translational modification Phosphotyrosine. Thr-1468 carries the phosphothreonine modification. Tyr-1493 is modified (phosphotyrosine). A Phosphoserine modification is found at Ser-1496. Thr-1502 bears the Phosphothreonine mark. A Phosphoserine modification is found at Ser-1515. Position 1518 is a phosphothreonine (Thr-1518). Ser-1543, Ser-1555, Ser-1575, Ser-1601, Ser-1715, and Ser-1727 each carry phosphoserine. Phosphothreonine occurs at positions 1731 and 1737. The segment at 1886 to 1905 is disordered; sequence QAEEAEEQSNTNLSKFRKLQ.

The protein belongs to the TRAFAC class myosin-kinesin ATPase superfamily. Myosin family. As to quaternary structure, muscle myosin is a hexameric protein that consists of 2 heavy chain subunits (MHC), 2 alkali light chain subunits (MLC) and 2 regulatory light chain subunits (MLC-2). Interacts with GCSAM.

It is found in the cytoplasm. The protein localises to the myofibril. Functionally, myosins are actin-based motor molecules with ATPase activity essential for muscle contraction. The chain is Myosin-2 (MYH2) from Bos taurus (Bovine).